The following is a 426-amino-acid chain: C4-dicarboxylate transport protein (426 aa).

The next 8 membrane-spanning stretches (helical) occupy residues 4–24 (SIFTSLYLQVLVAITIGILLG), 44–64 (LIKMIIAPVIFCTVVTGIAGM), 76–96 (IALLYFEVVSTIALIIGLVVV), 142–162 (IGAFASGNILQVLLFAVMFGF), 184–204 (VIFGVINMIMKLAPIGAFGAM), 222–242 (LILCFYITCALFVVLVLGSIA), 326–346 (IWHQVTLLVVLLLSSKGAAGV), and 352–372 (IVLAATLSAVGHLPVAGLALI).

The protein belongs to the dicarboxylate/amino acid:cation symporter (DAACS) (TC 2.A.23) family.

It localises to the cell inner membrane. Responsible for the transport of dicarboxylates such as succinate, fumarate, and malate from the periplasm across the membrane. In Edwardsiella ictaluri (strain 93-146), this protein is C4-dicarboxylate transport protein.